The chain runs to 181 residues: UPF0228 protein MA_3117 (181 aa).

This sequence belongs to the UPF0228 family.

This Methanosarcina acetivorans (strain ATCC 35395 / DSM 2834 / JCM 12185 / C2A) protein is UPF0228 protein MA_3117.